Consider the following 291-residue polypeptide: ATP synthase gamma chain (291 aa).

This sequence belongs to the ATPase gamma chain family. In terms of assembly, F-type ATPases have 2 components, CF(1) - the catalytic core - and CF(0) - the membrane proton channel. CF(1) has five subunits: alpha(3), beta(3), gamma(1), delta(1), epsilon(1). CF(0) has three main subunits: a, b and c.

It is found in the cell inner membrane. Produces ATP from ADP in the presence of a proton gradient across the membrane. The gamma chain is believed to be important in regulating ATPase activity and the flow of protons through the CF(0) complex. In Neisseria meningitidis serogroup A / serotype 4A (strain DSM 15465 / Z2491), this protein is ATP synthase gamma chain.